Consider the following 266-residue polypeptide: Glutamate racemase (266 aa).

Substrate contacts are provided by residues 9-10 and 41-42; these read DS and YG. Cysteine 72 (proton donor/acceptor) is an active-site residue. Residue 73–74 participates in substrate binding; the sequence is NT. The active-site Proton donor/acceptor is the cysteine 183. Position 184–185 (184–185) interacts with substrate; that stretch reads TH.

The protein belongs to the aspartate/glutamate racemases family.

The catalysed reaction is L-glutamate = D-glutamate. It participates in cell wall biogenesis; peptidoglycan biosynthesis. Its function is as follows. Provides the (R)-glutamate required for cell wall biosynthesis. The protein is Glutamate racemase of Listeria monocytogenes serotype 4a (strain HCC23).